The chain runs to 428 residues: GTPase Obg (428 aa).

Positions 1–158 (MFVDKVKVYA…RNLLLELKVL (158 aa)) constitute an Obg domain. Positions 159 to 329 (ADVGLVGFPS…LMLAIADELE (171 aa)) constitute an OBG-type G domain. Residues 165–172 (GFPSVGKS), 190–194 (FTTIT), 212–215 (DLPG), 282–285 (NKMD), and 310–312 (SAI) contribute to the GTP site. Mg(2+)-binding residues include Ser-172 and Thr-192. One can recognise an OCT domain in the interval 350–428 (KHELPIEPFT…IMKFEFEFVE (79 aa)).

The protein belongs to the TRAFAC class OBG-HflX-like GTPase superfamily. OBG GTPase family. Monomer. Requires Mg(2+) as cofactor.

It is found in the cytoplasm. Functionally, an essential GTPase which binds GTP, GDP and possibly (p)ppGpp with moderate affinity, with high nucleotide exchange rates and a fairly low GTP hydrolysis rate. Plays a role in control of the cell cycle, stress response, ribosome biogenesis and in those bacteria that undergo differentiation, in morphogenesis control. This Shouchella clausii (strain KSM-K16) (Alkalihalobacillus clausii) protein is GTPase Obg.